The sequence spans 962 residues: MSEELLSTRPSKRDYNDIEEPEDSHVTVHSVEQDSQHSGEESSTVDALQETEGDVDVIGEDEDEHDIPVMPTVTSSGEVLDESQVTPTKQASSSQPREEIIHGKGESVYSSFPCQVIPETLSRMTRTPPDGEHLEVYRMSNGRLRIYVVDHFKKFSPYSNLTHKPCTVCNRVMKSGEMHLNFPADLDRRRIWANLLGFKYKDILRSKMGPVSFSIAAGPICTEHFAEECFRNHNFNKSAIEAFGVPVAISPDVKTTPSKKSSRVPWVCTVCEFHSCSVVELQTHLLNHTEEMLKKKDNVLDVPEAGFMCPFCRKCTYGYKTISGYRRHLNAGPIHHCHLRRIYEFAKMNCRATELDPAESWDNWTRRNVYVAYHGCEPPANEIVLTPSPTKKAYVQNPEERTKMVHDEEKRKKAVRTLSFVGKEGGTSVNDLNVMQRQVFLQLRREAEINTKAEESAQGTKEQESSQKKHAEEESDDVSELTSHQSPQAPMGSGERRKATRLATSATNSPIKKVAKHEVPATAPSTPAKKRKISHEEEHDPTPESVEREPTVSPNDPRERLRLKERDEQFAKMVQKRSQQVKRLINAKQFKKQEAATKKPRKALAYNLAKGIAATSSTEPEDKVTSSEQTPEPTTSQKFIARNTRSKTKESAVQKVEKPATPVAKPAPVEKEPEERPLKSMLARSFVAGVRPSMAKYQIPLESFTATASLGGGRSLSSGVISRPPTSSSPGGIFSQRVMGAVAQEKGPAKRPSVLSRRPLILSPRKKTSTPRPTLSHHESSPNFSASSPVVVSDEYLIPATDMEVEMVEEVIDSMGNSSSEDVATSSTSSERQPMLTLAEALEMDGSSGTVKDQDMEEISKEMMKDAHYYRAMEDAIKCRTVTKMRADMRLSRHCIRQIEAARARARLFGERTEDYQIFYSNDGAQVLTKKDPKWRELQQQQQQQQQQQEQFPGQGSSDSQQ.

2 disordered regions span residues Met1 to Gly53 and Thr74 to Glu99. A compositionally biased stretch (basic and acidic residues) spans Asp23–Glu40. Over residues Thr74 to Gln95 the composition is skewed to polar residues. The segment at Leu161 to Ile249 adopts a THAP-type zinc-finger fold. Composition is skewed to basic and acidic residues over residues Lys452 to Glu472 and Ser534 to Phe570. 4 disordered regions span residues Lys452–Gln575, Ile612–Arg676, Gln744–Ser788, and Asp932–Gln962. A compositionally biased stretch (low complexity) spans Ser626–Gln637. Basic and acidic residues predominate over residues Lys647–Lys658. The segment covering Gln939 to Gln951 has biased composition (low complexity). A compositionally biased stretch (polar residues) spans Phe952–Gln962.

As to expression, expressed in vulval precursor P(3-8).p cells and their descendants, neurons of the head, tail and ventral cord, hypodermal and intestinal cells and germline cells.

The protein resides in the nucleus. In terms of biological role, required to negatively regulate vulval development. Antagonizes Ras-mediated vulval induction. Acts cell autonomously. In Caenorhabditis elegans, this protein is Protein lin-36 (lin-36).